We begin with the raw amino-acid sequence, 1166 residues long: Calcium-activated potassium channel subunit alpha-1 (1166 aa).

The span at 1 to 15 shows a compositional bias: gly residues; sequence MANGGGGGGGGGGGS. Disordered regions lie at residues 1 to 20 and 30 to 51; these read MANG…LRMS and LDAS…SVHE. The Extracellular segment spans residues 1 to 74; that stretch reads MANGGGGGGG…VPCDSRGQRM (74 aa). A compositionally biased stretch (low complexity) spans 33–48; sequence SSSSSSSSSSSSSSSS. The helical transmembrane segment at 75–95 threads the bilayer; sequence WWAFLASSMVTFFGGLFIILL. The Cytoplasmic segment spans residues 96-166; the sequence is WRTLKYLWTV…MISAQTLTGR (71 aa). Residues cysteine 106, cysteine 107, and cysteine 109 are each lipidated (S-palmitoyl cysteine). Position 139 is a phosphothreonine; by CamK2 (threonine 139). Residues 167–187 traverse the membrane as a helical segment; the sequence is VLVVLVFALSIGALVIYFIDS. Over 188 to 202 the chain is Extracellular; the sequence is SNPIESCQNFYKDFT. Residues 203–223 form a helical membrane-spanning segment; sequence LQIDMAFNVFFLLYFGLRFIA. Topologically, residues 224 to 227 are cytoplasmic; the sequence is ANDK. Residues 228-248 form a helical membrane-spanning segment; it reads LWFWLEVNSVVDFFTVPPVFV. Over 249–252 the chain is Extracellular; it reads SVYL. Residues 253 to 273 traverse the membrane as a helical; Voltage-sensor segment; sequence NRSWLGLRFLRALRLIQFSEI. At 274–288 the chain is on the cytoplasmic side; sequence LQFLNILKTSNSIKL. The chain crosses the membrane as a helical span at residues 289–309; the sequence is VNLLSIFISTWLTAAGFIHLV. At 310–323 the chain is on the extracellular side; it reads ENSGDPWENFQNNQ. Positions 324 to 346 form an intramembrane region, pore-forming; it reads ALTYWECVYLLMVTMSTVGYGDV. Positions 340-343 match the Selectivity for potassium motif; that stretch reads TVGY. The Extracellular portion of the chain corresponds to 347–355; the sequence is YAKTTLGRL. A helical transmembrane segment spans residues 356 to 376; that stretch reads FMVFFILGGLAMFASYVPEII. Over 377–1166 the chain is Cytoplasmic; it reads ELIGNRKKYG…KQKYVQEERL (790 aa). Residues 395–537 enclose the RCK N-terminal 1 domain; that stretch reads RKHIVVCGHI…WNWKEGDDAI (143 aa). Glutamate 427, glutamine 450, and glutamate 452 together coordinate Mg(2+). The segment S7 stretch occupies residues 544–564; it reads LGFIAQSCLAQGLSTMLANLF. Residues 601–621 are segment S8; the sequence is LSFPTVCELCFVKLKLLMIAI. A heme-binding motif region spans residues 665–669; sequence CKACH. The segment at 689-717 is disordered; that stretch reads EQPSTLSPKKKQRNGGMRNSPSSSPKLMR. Threonine 693 is modified (phosphothreonine). Phosphoserine occurs at positions 695, 708, and 712. A segment S9 region spans residues 767–787; that stretch reads VLSGHVVVCIFGDVSSALIGL. The 145-residue stretch at 769-913 folds into the RCK N-terminal 2 domain; that stretch reads SGHVVVCIFG…MDRSSPDNSP (145 aa). At threonine 900 the chain carries Phosphothreonine. Residues serine 908 and serine 912 each carry the phosphoserine modification. Positions 933–955 match the Calcium bowl motif; sequence TELVNDTNVQFLDQDDDDDPDTE. Residues glutamine 942, aspartate 945, aspartate 948, and aspartate 950 each coordinate Ca(2+). The tract at residues 962 to 982 is segment S10; sequence FACGTAFAVSVLDSLMSATYF. A compositionally biased stretch (low complexity) spans 1116 to 1141; that stretch reads RASLSHSSHSSQSSSKKSSSVHSIPS. A disordered region spans residues 1116–1166; that stretch reads RASLSHSSHSSQSSSKKSSSVHSIPSTANRQNRPKSRESRDKQKYVQEERL. Residues 1150–1166 show a composition bias toward basic and acidic residues; it reads KSRESRDKQKYVQEERL. 2 positions are modified to phosphoserine; by PKG: serine 1151 and serine 1154.

It belongs to the potassium channel family. Calcium-activated (TC 1.A.1.3) subfamily. KCa1.1/KCNMA1 sub-subfamily. Homotetramer; which constitutes the calcium-activated potassium channel. Interacts with beta subunits KCNMB1, KCNMB2, KCNMB3 and KCNMB4. Interacts with gamma subunits LRRC26, LRRC38, LRRC52 and LRRC55. Beta and gamma subunits are accessory, and modulate its activity. Interacts with RAB11B. Phosphorylated. Stimulated by PKG, but not by PKA. In smooth muscles, phosphorylation affects its activity. In terms of processing, phosphorylated. Exclusively stimulated by PKA. In smooth muscles, phosphorylation affects its activity. Post-translationally, incremental phosphorylation of Thr-139 of the KCNMA1 tetramer changes the response to ethanol from increased activation to inhibition of channel activity. Palmitoylation by ZDHHC22 and ZDHHC23 within the intracellular linker between the S0 and S1 transmembrane domains regulates localization to the plasma membrane. Depalmitoylated by LYPLA1 and LYPLAL1, leading to retard exit from the trans-Golgi network.

The protein localises to the cell membrane. The enzyme catalyses K(+)(in) = K(+)(out). Its activity is regulated as follows. Ethanol and carbon monoxide-bound heme increase channel activation. Heme inhibits channel activation. Phosphorylation of Thr-139 leads to inhibition of channel activity by ethanol. Potassium channel activated by both membrane depolarization or increase in cytosolic Ca(2+) that mediates export of K(+). It is also activated by concentration of cytosolic Mg(2+). Its activation dampens the excitatory events that elevate the cytosolic Ca(2+) concentration and/or depolarize the cell membrane. It therefore contributes to repolarization of the membrane potential. Plays a key role in controlling excitability in a number of systems, such as regulation of the contraction of smooth muscle, the tuning of hair cells in the cochlea, regulation of transmitter release, and innate immunity. In smooth muscles, its activation by high level of Ca(2+), caused by ryanodine receptors in the sarcoplasmic reticulum, regulates the membrane potential. In cochlea cells, its number and kinetic properties partly determine the characteristic frequency of each hair cell and thereby helps to establish a tonotopic map. Kinetics of KCNMA1 channels are determined by alternative splicing, phosphorylation status and its combination with modulating beta subunits. Highly sensitive to both iberiotoxin (IbTx) and charybdotoxin (CTX). The protein is Calcium-activated potassium channel subunit alpha-1 (KCNMA1) of Bos taurus (Bovine).